The following is a 531-amino-acid chain: Tyrosine/DOPA decarboxylase 2 (531 aa).

Lysine 319 carries the post-translational modification N6-(pyridoxal phosphate)lysine.

Belongs to the group II decarboxylase family. In terms of assembly, homodimer. Pyridoxal 5'-phosphate serves as cofactor. In terms of tissue distribution, predominantly expressed in the roots and stems, while a lower level expression is seen in the sepals and carpels of fully expanded flowers.

It catalyses the reaction L-tyrosine + H(+) = tyramine + CO2. The catalysed reaction is L-dopa + H(+) = dopamine + CO2. The enzyme catalyses 5-hydroxy-L-tryptophan + H(+) = serotonin + CO2. In terms of biological role, marginally higher substrate specificity for L-DOPA over L-tyrosine. The sequence is that of Tyrosine/DOPA decarboxylase 2 (TYDC2) from Papaver somniferum (Opium poppy).